A 396-amino-acid chain; its full sequence is Ribosomal RNA large subunit methyltransferase I (396 aa).

The region spanning 2–81 (TVRLILAKGR…EVIDCAFFIR (80 aa)) is the PUA domain.

Belongs to the methyltransferase superfamily. RlmI family.

It is found in the cytoplasm. It catalyses the reaction cytidine(1962) in 23S rRNA + S-adenosyl-L-methionine = 5-methylcytidine(1962) in 23S rRNA + S-adenosyl-L-homocysteine + H(+). Functionally, specifically methylates the cytosine at position 1962 (m5C1962) of 23S rRNA. The chain is Ribosomal RNA large subunit methyltransferase I from Yersinia pestis bv. Antiqua (strain Antiqua).